The chain runs to 153 residues: Ribosomal RNA large subunit methyltransferase H (153 aa).

S-adenosyl-L-methionine-binding positions include isoleucine 75, glycine 103, and 121–126 (LSAMTF).

Belongs to the RNA methyltransferase RlmH family. In terms of assembly, homodimer.

Its subcellular location is the cytoplasm. The catalysed reaction is pseudouridine(1915) in 23S rRNA + S-adenosyl-L-methionine = N(3)-methylpseudouridine(1915) in 23S rRNA + S-adenosyl-L-homocysteine + H(+). Its function is as follows. Specifically methylates the pseudouridine at position 1915 (m3Psi1915) in 23S rRNA. This chain is Ribosomal RNA large subunit methyltransferase H, found in Helicobacter hepaticus (strain ATCC 51449 / 3B1).